We begin with the raw amino-acid sequence, 337 residues long: Tetraacyldisaccharide 4'-kinase (337 aa).

58 to 65 (TVGGSGKT) contributes to the ATP binding site.

This sequence belongs to the LpxK family.

The catalysed reaction is a lipid A disaccharide + ATP = a lipid IVA + ADP + H(+). Its pathway is glycolipid biosynthesis; lipid IV(A) biosynthesis; lipid IV(A) from (3R)-3-hydroxytetradecanoyl-[acyl-carrier-protein] and UDP-N-acetyl-alpha-D-glucosamine: step 6/6. Transfers the gamma-phosphate of ATP to the 4'-position of a tetraacyldisaccharide 1-phosphate intermediate (termed DS-1-P) to form tetraacyldisaccharide 1,4'-bis-phosphate (lipid IVA). The sequence is that of Tetraacyldisaccharide 4'-kinase from Shewanella putrefaciens (strain CN-32 / ATCC BAA-453).